The chain runs to 307 residues: Aspartate carbamoyltransferase catalytic subunit (307 aa).

Carbamoyl phosphate is bound by residues Arg-49 and Thr-50. Lys-77 is a binding site for L-aspartate. Arg-99, His-127, and Gln-130 together coordinate carbamoyl phosphate. The L-aspartate site is built by Arg-160 and Arg-211. Residues Ala-250 and Pro-251 each contribute to the carbamoyl phosphate site.

The protein belongs to the aspartate/ornithine carbamoyltransferase superfamily. ATCase family. Heterododecamer (2C3:3R2) of six catalytic PyrB chains organized as two trimers (C3), and six regulatory PyrI chains organized as three dimers (R2).

The enzyme catalyses carbamoyl phosphate + L-aspartate = N-carbamoyl-L-aspartate + phosphate + H(+). Its pathway is pyrimidine metabolism; UMP biosynthesis via de novo pathway; (S)-dihydroorotate from bicarbonate: step 2/3. In terms of biological role, catalyzes the condensation of carbamoyl phosphate and aspartate to form carbamoyl aspartate and inorganic phosphate, the committed step in the de novo pyrimidine nucleotide biosynthesis pathway. This chain is Aspartate carbamoyltransferase catalytic subunit, found in Bacillus pumilus (strain SAFR-032).